The chain runs to 555 residues: Gamma-aminobutyric acid receptor subunit alpha-4 (555 aa).

A signal peptide spans 1-35; it reads MVSAKKVPAIAMSFGVSFALLHFLCLAACLNESPG. Residues 36-259 are Extracellular-facing; sequence QNQKEEKLCP…FHLRRKMGYF (224 aa). N-linked (GlcNAc...) asparagine glycosylation is present at N47. Position 100 (R100) interacts with 4-aminobutanoate. N144 and N157 each carry an N-linked (GlcNAc...) asparagine glycan. T163 lines the 4-aminobutanoate pocket. C172 and C186 form a disulfide bridge. The chain crosses the membrane as a helical span at residues 260–280; sequence MIQTYIPCIMTVILSQVSFWI. At 281-284 the chain is on the cytoplasmic side; the sequence is NKES. The helical transmembrane segment at 285–305 threads the bilayer; the sequence is VPARTVFGITTVLTMTTLSIS. Over 306–318 the chain is Extracellular; the sequence is ARHSLPKVSYATA. The helical transmembrane segment at 319-341 threads the bilayer; sequence MDWFIAVCFAFVFSALIEFAAVN. Residues 342-518 are Cytoplasmic-facing; it reads YFTNVQMEKA…PPPSGSGTSK (177 aa). Disordered regions lie at residues 354–435 and 495–516; these read KTSK…SPNP and GTSG…GSGT. Residues 410-421 are compositionally biased toward low complexity; the sequence is SSKSSTVVQGSS. Positions 422 to 435 are enriched in polar residues; that stretch reads EATPQSYLASSPNP. The chain crosses the membrane as a helical span at residues 519 to 545; it reads IDKYARILFPVTFGAFNMVYWVVYLSK. The Extracellular portion of the chain corresponds to 546–555; that stretch reads DTMEKSESLM.

Belongs to the ligand-gated ion channel (TC 1.A.9) family. Gamma-aminobutyric acid receptor (TC 1.A.9.5) subfamily. GABRA4 sub-subfamily. Heteropentamer, formed by a combination of alpha (GABRA1-6), beta (GABRB1-3), gamma (GABRG1-3), delta (GABRD), epsilon (GABRE), rho (GABRR1-3), pi (GABRP) and theta (GABRQ) chains, each subunit exhibiting distinct physiological and pharmacological properties. In terms of tissue distribution, expressed in the brain.

It is found in the cell membrane. The protein resides in the postsynaptic cell membrane. It catalyses the reaction chloride(in) = chloride(out). With respect to regulation, potentiated by histamine. Alpha subunit of the heteropentameric ligand-gated chloride channel gated by gamma-aminobutyric acid (GABA), a major inhibitory neurotransmitter in the brain. GABA-gated chloride channels, also named GABA(A) receptors (GABAAR), consist of five subunits arranged around a central pore and contain GABA active binding site(s) located at the alpha and beta subunit interface(s). When activated by GABA, GABAARs selectively allow the flow of chloride anions across the cell membrane down their electrochemical gradient. GABAARs containing alpha-4 are predominantly extrasynaptic, contributing to tonic inhibition in dentate granule cells and thalamic relay neurons. Extrasynaptic alpha-4-containing GABAARs control levels of excitability and network activity. GABAARs containing alpha-4 are often found with the delta or gamma-2 subunits, in combination with beta subunits. GABAAR containing alpha-4-beta-3-delta subunits can simultaneously bind GABA and histamine where histamine binds at the interface of two neighboring beta subunits, which may be involved in the regulation of sleep and wakefulness. The polypeptide is Gamma-aminobutyric acid receptor subunit alpha-4 (GABRA4) (Bos taurus (Bovine)).